Here is a 126-residue protein sequence, read N- to C-terminus: Acidic phospholipase A2 2 (126 aa).

The propeptide occupies 1–7; the sequence is SNRPMPL. 7 cysteine pairs are disulfide-bonded: Cys-18–Cys-78, Cys-33–Cys-125, Cys-35–Cys-51, Cys-50–Cys-106, Cys-57–Cys-99, Cys-67–Cys-92, and Cys-85–Cys-97. Ca(2+)-binding residues include Tyr-34, Gly-36, and Gly-38. Residue His-54 is part of the active site. Residue Asp-55 participates in Ca(2+) binding. Asp-100 is a catalytic residue.

It belongs to the phospholipase A2 family. Group I subfamily. D49 sub-subfamily. As to quaternary structure, heterodimer formed between two homologous isoforms: isoform 1 and isoform 2. Requires Ca(2+) as cofactor. In terms of tissue distribution, expressed by the venom gland.

Its subcellular location is the secreted. It carries out the reaction a 1,2-diacyl-sn-glycero-3-phosphocholine + H2O = a 1-acyl-sn-glycero-3-phosphocholine + a fatty acid + H(+). PLA2 catalyzes the calcium-dependent hydrolysis of the 2-acyl groups in 3-sn-phosphoglycerides. The chain is Acidic phospholipase A2 2 from Naja sagittifera (Andaman cobra).